The following is a 464-amino-acid chain: Synaptosomal-associated protein 47 (464 aa).

A disordered region spans residues 20–42 (GRLWDSSGVPQRQKRPGPWRTQT). T-SNARE coiled-coil homology domains are found at residues 154 to 216 (VADA…LTEL) and 401 to 463 (TSLP…MKRL).

Belongs to the SVAP1 family. Forms a complex containing SNAP47, VAMP2 and STX1A. Associates with the BLOC-1 complex. Interacts with BLOC1S6.

It is found in the endomembrane system. Its subcellular location is the cytoplasm. It localises to the perinuclear region. Plays a role in intracellular membrane fusion. This chain is Synaptosomal-associated protein 47 (SNAP47), found in Homo sapiens (Human).